Reading from the N-terminus, the 252-residue chain is Phosphonates import ATP-binding protein PhnC 1 (252 aa).

An ABC transporter domain is found at 2–244 (ISLNKLGVTY…QLEEIYQTLS (243 aa)). An ATP-binding site is contributed by 35–42 (GSSGAGKS).

It belongs to the ABC transporter superfamily. Phosphonates importer (TC 3.A.1.9.1) family. The complex is composed of two ATP-binding proteins (PhnC), two transmembrane proteins (PhnE) and a solute-binding protein (PhnD).

It is found in the cell inner membrane. The enzyme catalyses phosphonate(out) + ATP + H2O = phosphonate(in) + ADP + phosphate + H(+). In terms of biological role, part of the ABC transporter complex PhnCDE involved in phosphonates import. Responsible for energy coupling to the transport system. The sequence is that of Phosphonates import ATP-binding protein PhnC 1 from Trichodesmium erythraeum (strain IMS101).